The following is a 297-amino-acid chain: Light-independent protochlorophyllide reductase iron-sulfur ATP-binding protein (297 aa).

ATP contacts are provided by residues 41–46 (GIGKST) and Lys-70. Ser-45 provides a ligand contact to Mg(2+). Residues Cys-126 and Cys-160 each coordinate [4Fe-4S] cluster. Residues 211–212 (NR) and 235–237 (PDL) contribute to the ATP site.

Belongs to the NifH/BchL/ChlL family. Homodimer. Protochlorophyllide reductase is composed of three subunits; BchL, BchN and BchB. It depends on [4Fe-4S] cluster as a cofactor.

It catalyses the reaction chlorophyllide a + oxidized 2[4Fe-4S]-[ferredoxin] + 2 ADP + 2 phosphate = protochlorophyllide a + reduced 2[4Fe-4S]-[ferredoxin] + 2 ATP + 2 H2O. It participates in porphyrin-containing compound metabolism; bacteriochlorophyll biosynthesis (light-independent). Functionally, component of the dark-operative protochlorophyllide reductase (DPOR) that uses Mg-ATP and reduced ferredoxin to reduce ring D of protochlorophyllide (Pchlide) to form chlorophyllide a (Chlide). This reaction is light-independent. The L component serves as a unique electron donor to the NB-component of the complex, and binds Mg-ATP. This Cereibacter sphaeroides (strain ATCC 17025 / ATH 2.4.3) (Rhodobacter sphaeroides) protein is Light-independent protochlorophyllide reductase iron-sulfur ATP-binding protein.